The primary structure comprises 852 residues: Ubiquitin carboxyl-terminal hydrolase 4 (852 aa).

One can recognise a Rhodanese domain in the interval 172-296; sequence ASGTVLLVDV…WSNAHPDFCV (125 aa). Positions 369–393 are disordered; sequence RSSSSSSNINERPGSVPPQLSNGST. One can recognise a USP domain in the interval 488–849; that stretch reads VGLVNCGNSC…NAYVLFYHRI (362 aa). Cysteine 497 acts as the Nucleophile in catalysis. Histidine 806 acts as the Proton acceptor in catalysis.

Belongs to the peptidase C19 family.

It localises to the cytoplasm. The protein resides in the late endosome membrane. The catalysed reaction is Thiol-dependent hydrolysis of ester, thioester, amide, peptide and isopeptide bonds formed by the C-terminal Gly of ubiquitin (a 76-residue protein attached to proteins as an intracellular targeting signal).. RFU1 is an inhibitor of deubiquitination activity. Its function is as follows. Ubiquitin thioesterase that acts at the late endosome/prevacuolar compartment to recover ubiquitin from ubiquitinated membrane proteins en route to the vacuole. Also removes ubiquitin from soluble proteins targeted to proteasomes. Is essential to maintain a normal level of free ubiquitin. Required for promoting coordination of DNA replication and avoids DNA overreplication. This Eremothecium gossypii (strain ATCC 10895 / CBS 109.51 / FGSC 9923 / NRRL Y-1056) (Yeast) protein is Ubiquitin carboxyl-terminal hydrolase 4 (DOA4).